A 452-amino-acid chain; its full sequence is Probable cysteine protease RD21C (452 aa).

A signal peptide spans M1 to A29. A propeptide spans T30–S128 (activation peptide). N82 carries N-linked (GlcNAc...) asparagine glycosylation. Intrachain disulfides connect C150/C192, C184/C226, C284/C335, C363/C375, and C369/C390. Residue C153 is part of the active site. Residues H290 and N310 contribute to the active site. Residues K346 to A452 constitute a propeptide, removed in mature form.

This sequence belongs to the peptidase C1 family. As to quaternary structure, interacts with WSCP.

Functionally, probable thiol protease. This Arabidopsis thaliana (Mouse-ear cress) protein is Probable cysteine protease RD21C.